Consider the following 194-residue polypeptide: Oligoribonuclease (194 aa).

The Exonuclease domain maps to 11–174; the sequence is LIWIDLEMTG…SDVRDSIDEL (164 aa). The active site involves Tyr132.

The protein belongs to the oligoribonuclease family.

Its subcellular location is the cytoplasm. 3'-to-5' exoribonuclease specific for small oligoribonucleotides. This Xanthomonas euvesicatoria pv. vesicatoria (strain 85-10) (Xanthomonas campestris pv. vesicatoria) protein is Oligoribonuclease.